A 215-amino-acid polypeptide reads, in one-letter code: Probable phosphoglycerate mutase GpmB (215 aa).

Residues 8–15 (RHGETQWN), 21–22 (QG), arginine 58, arginine 60, 82–85 (ELNM), 104–105 (RR), and 151–152 (GI) contribute to the substrate site. Histidine 9 serves as the catalytic Tele-phosphohistidine intermediate. The active-site Proton donor/acceptor is glutamate 82.

Belongs to the phosphoglycerate mutase family. GpmB subfamily.

The catalysed reaction is (2R)-2-phosphoglycerate = (2R)-3-phosphoglycerate. It functions in the pathway carbohydrate degradation; glycolysis; pyruvate from D-glyceraldehyde 3-phosphate: step 3/5. The protein is Probable phosphoglycerate mutase GpmB of Escherichia fergusonii (strain ATCC 35469 / DSM 13698 / CCUG 18766 / IAM 14443 / JCM 21226 / LMG 7866 / NBRC 102419 / NCTC 12128 / CDC 0568-73).